The following is a 123-amino-acid chain: uncharacterized protein (123 aa).

This sequence to M.tuberculosis Rv0477.

This is an uncharacterized protein from Mycobacterium leprae (strain TN).